The chain runs to 348 residues: GTP 3',8-cyclase (348 aa).

The 219-residue stretch at 24 to 242 folds into the Radical SAM core domain; that stretch reads PFGRAVTYLR…EKQFTLTDID (219 aa). Arg33 provides a ligand contact to GTP. 2 residues coordinate [4Fe-4S] cluster: Cys40 and Cys44. Tyr46 lines the S-adenosyl-L-methionine pocket. Position 47 (Cys47) interacts with [4Fe-4S] cluster. Arg82 is a GTP binding site. S-adenosyl-L-methionine is bound at residue Gly86. A GTP-binding site is contributed by Thr115. Ser139 is an S-adenosyl-L-methionine binding site. GTP is bound at residue Lys175. Met209 provides a ligand contact to S-adenosyl-L-methionine. Positions 272 and 275 each coordinate [4Fe-4S] cluster. 277–279 is a GTP binding site; sequence RVR. [4Fe-4S] cluster is bound at residue Cys289.

It belongs to the radical SAM superfamily. MoaA family. In terms of assembly, monomer and homodimer. Requires [4Fe-4S] cluster as cofactor.

It carries out the reaction GTP + AH2 + S-adenosyl-L-methionine = (8S)-3',8-cyclo-7,8-dihydroguanosine 5'-triphosphate + 5'-deoxyadenosine + L-methionine + A + H(+). It functions in the pathway cofactor biosynthesis; molybdopterin biosynthesis. Catalyzes the cyclization of GTP to (8S)-3',8-cyclo-7,8-dihydroguanosine 5'-triphosphate. This chain is GTP 3',8-cyclase, found in Rhizobium etli (strain CIAT 652).